A 359-amino-acid polypeptide reads, in one-letter code: CMP-N-acetylneuraminate-poly-alpha-2,8-sialyltransferase (359 aa).

At 1–7 (MRSIRKR) the chain is on the cytoplasmic side. Residues 8–20 (WTICTISLLLIFY) form a helical; Signal-anchor for type II membrane protein membrane-spanning segment. Topologically, residues 21–359 (KTKEIARTEE…KLTTGKCMKQ (339 aa)) are lumenal. Asparagine 50, asparagine 74, and asparagine 119 each carry an N-linked (GlcNAc...) asparagine glycan. 2 cysteine pairs are disulfide-bonded: cysteine 142–cysteine 292 and cysteine 156–cysteine 356. 2 residues coordinate CMP-N-acetyl-beta-neuraminate: asparagine 147 and asparagine 170. 2 N-linked (GlcNAc...) asparagine glycosylation sites follow: asparagine 204 and asparagine 219. Residues serine 279, threonine 280, glycine 281, and tryptophan 301 each contribute to the CMP-N-acetyl-beta-neuraminate site. Residue histidine 331 is the Proton donor/acceptor of the active site.

It belongs to the glycosyltransferase 29 family. In terms of processing, autopolysialylated.

The protein localises to the golgi apparatus membrane. It localises to the secreted. The catalysed reaction is [N-acetyl-alpha-D-neuraminosyl-(2-&gt;8)](n) + CMP-N-acetyl-beta-neuraminate = [N-acetyl-alpha-D-neuraminosyl-(2-&gt;8)](n+1) + CMP + H(+). It participates in protein modification; protein glycosylation. Its function is as follows. Catalyzes the transfer of a sialic acid from a CMP-linked sialic acid donor onto a terminal alpha-2,3-, alpha-2,6-, or alpha-2,8-linked sialic acid of an N-linked glycan protein acceptor through alpha-2,8-linkages. Therefore, participates in polysialic acid synthesis on various sialylated N-acetyllactosaminyl oligosaccharides, including NCAM1 N-glycans, FETUB N-glycans and AHSG. It is noteworthy that alpha-2,3-linked sialic acid is apparently a better acceptor than alpha-2,6-linked sialic acid. The protein is CMP-N-acetylneuraminate-poly-alpha-2,8-sialyltransferase of Cricetulus griseus (Chinese hamster).